The following is a 786-amino-acid chain: Endonuclease MutS2 (786 aa).

332-339 (GPNTGGKT) is an ATP binding site. The Smr domain maps to 711 to 786 (IDLRGMDSME…GTGVTVVELK (76 aa)).

Belongs to the DNA mismatch repair MutS family. MutS2 subfamily. As to quaternary structure, homodimer. Binds to stalled ribosomes, contacting rRNA.

Functionally, endonuclease that is involved in the suppression of homologous recombination and thus may have a key role in the control of bacterial genetic diversity. In terms of biological role, acts as a ribosome collision sensor, splitting the ribosome into its 2 subunits. Detects stalled/collided 70S ribosomes which it binds and splits by an ATP-hydrolysis driven conformational change. Acts upstream of the ribosome quality control system (RQC), a ribosome-associated complex that mediates the extraction of incompletely synthesized nascent chains from stalled ribosomes and their subsequent degradation. Probably generates substrates for RQC. The protein is Endonuclease MutS2 of Clostridium tetani (strain Massachusetts / E88).